Reading from the N-terminus, the 203-residue chain is Large ribosomal subunit protein bL25 (203 aa).

This sequence belongs to the bacterial ribosomal protein bL25 family. CTC subfamily. In terms of assembly, part of the 50S ribosomal subunit; part of the 5S rRNA/L5/L18/L25 subcomplex. Contacts the 5S rRNA. Binds to the 5S rRNA independently of L5 and L18.

In terms of biological role, this is one of the proteins that binds to the 5S RNA in the ribosome where it forms part of the central protuberance. The protein is Large ribosomal subunit protein bL25 of Rickettsia prowazekii (strain Madrid E).